A 145-amino-acid polypeptide reads, in one-letter code: Small ribosomal subunit protein eS19 (145 aa).

At lysine 23 the chain carries N6-acetyllysine. Omega-N-methylarginine is present on arginine 67. 2 positions are modified to N6-acetyllysine: lysine 111 and lysine 115. Position 143 is an N6-succinyllysine (lysine 143).

The protein belongs to the eukaryotic ribosomal protein eS19 family. As to quaternary structure, component of the small ribosomal subunit. Part of the small subunit (SSU) processome, composed of more than 70 proteins and the RNA chaperone small nucleolar RNA (snoRNA) U3. Interacts with RPS19BP1.

It localises to the cytoplasm. The protein localises to the nucleus. Its subcellular location is the nucleolus. Its function is as follows. Component of the small ribosomal subunit. The ribosome is a large ribonucleoprotein complex responsible for the synthesis of proteins in the cell. Required for pre-rRNA processing and maturation of 40S ribosomal subunits. Part of the small subunit (SSU) processome, first precursor of the small eukaryotic ribosomal subunit. During the assembly of the SSU processome in the nucleolus, many ribosome biogenesis factors, an RNA chaperone and ribosomal proteins associate with the nascent pre-rRNA and work in concert to generate RNA folding, modifications, rearrangements and cleavage as well as targeted degradation of pre-ribosomal RNA by the RNA exosome. This Rattus norvegicus (Rat) protein is Small ribosomal subunit protein eS19 (Rps19).